Here is a 148-residue protein sequence, read N- to C-terminus: Transcriptional repressor NrdR (148 aa).

A zinc finger lies at 3–34; the sequence is CPFCHNEDTQVLDTRVSDEGDTIRRRRRCAKC. In terms of domain architecture, ATP-cone spans 49-139; it reads PAIVKKNGSR…VYRSFADIES (91 aa).

It belongs to the NrdR family. Zn(2+) is required as a cofactor.

Its function is as follows. Negatively regulates transcription of bacterial ribonucleotide reductase nrd genes and operons by binding to NrdR-boxes. The protein is Transcriptional repressor NrdR of Polynucleobacter necessarius subsp. necessarius (strain STIR1).